A 70-amino-acid chain; its full sequence is Ribosome modulation factor (70 aa).

This sequence belongs to the ribosome modulation factor family.

It localises to the cytoplasm. During stationary phase, converts 70S ribosomes to an inactive dimeric form (100S ribosomes). In Marinobacter adhaerens (strain DSM 23420 / HP15), this protein is Ribosome modulation factor.